The following is a 102-amino-acid chain: Small ribosomal subunit protein uS10 (102 aa).

It belongs to the universal ribosomal protein uS10 family. In terms of assembly, part of the 30S ribosomal subunit.

In terms of biological role, involved in the binding of tRNA to the ribosomes. This chain is Small ribosomal subunit protein uS10, found in Micrococcus luteus (strain ATCC 4698 / DSM 20030 / JCM 1464 / CCM 169 / CCUG 5858 / IAM 1056 / NBRC 3333 / NCIMB 9278 / NCTC 2665 / VKM Ac-2230) (Micrococcus lysodeikticus).